The sequence spans 235 residues: uncharacterized protein (235 aa).

Transmembrane regions (helical) follow at residues 167 to 187 and 190 to 210; these read AFKLAILVTPFVETLSWLNEL and LFAYCPAELSLSLFFLCLLLW.

It is found in the membrane. This is an uncharacterized protein from Saccharomyces cerevisiae (strain ATCC 204508 / S288c) (Baker's yeast).